Here is a 217-residue protein sequence, read N- to C-terminus: Large ribosomal subunit protein uL29m (217 aa).

Belongs to the universal ribosomal protein uL29 family. Component of the mitochondrial large ribosomal subunit. Mature mitochondrial ribosomes consist of a small (37S) and a large (54S) subunit. The 37S subunit contains at least 33 different proteins and 1 molecule of RNA (15S). The 54S subunit contains at least 45 different proteins and 1 molecule of RNA (21S).

The protein localises to the mitochondrion. The protein is Large ribosomal subunit protein uL29m (mrpl4) of Aspergillus fumigatus (strain ATCC MYA-4609 / CBS 101355 / FGSC A1100 / Af293) (Neosartorya fumigata).